Consider the following 185-residue polypeptide: Transcription factor bHLH109 (185 aa).

In terms of domain architecture, bHLH spans Arg67–Leu117.

This sequence belongs to the bHLH protein family. Homodimer.

The protein resides in the nucleus. Functionally, transcription factor involved in somatic embryogenesis. Acts as a positive regulator of somatic embryo formation. Acts as a positive regulator of ECP63 by targeting its promoter and inducing its expression. The polypeptide is Transcription factor bHLH109 (BHLH109) (Arabidopsis thaliana (Mouse-ear cress)).